A 319-amino-acid chain; its full sequence is MASEEKIYDVIIIGAGPAGMTAALYTSRADLDTLMIERGVPGGQMVNTAEVENYPGFDSILGPDLSDKMLSGAKQFGAEYAYGDIKEVIDGKEFKTVTAGSKTYKARAIIIATGAEHRKLGAAGEEELSGRGVSYCAVCDGAFFKNRELVVVGGGDSAVEEGTYLTRYADKVTIVHRRDKLRAQQILQDRAFKDEKVDFIWNNTVEEIIGDGKKVTSVKLVSTVDGSESIMPVDGVFIYVGLVPLTKAFLSLGITDEEGYIVTDEEMRTNLPGIFAAGDVRAKSLRQIVTATGDGGLAGQNAQKYVEELKEALEAEAAK.

FAD is bound at residue 37-44 (ERGVPGGQ). The cysteines at positions 136 and 139 are disulfide-linked. 279-288 (DVRAKSLRQI) is a binding site for FAD.

Belongs to the class-II pyridine nucleotide-disulfide oxidoreductase family. In terms of assembly, homodimer. It depends on FAD as a cofactor.

It localises to the cytoplasm. The catalysed reaction is [thioredoxin]-dithiol + NADP(+) = [thioredoxin]-disulfide + NADPH + H(+). The chain is Thioredoxin reductase (trxB) from Listeria innocua serovar 6a (strain ATCC BAA-680 / CLIP 11262).